Reading from the N-terminus, the 2291-residue chain is Protein Ycf2 A (2291 aa).

1642 to 1649 (GSIGTGRS) is an ATP binding site.

The protein belongs to the Ycf2 family.

The protein resides in the plastid. It is found in the chloroplast stroma. Probable ATPase of unknown function. Its presence in a non-photosynthetic plant (Epifagus virginiana) and experiments in tobacco indicate that it has an essential function which is probably not related to photosynthesis. The sequence is that of Protein Ycf2 A (ycf2-A) from Atropa belladonna (Belladonna).